The following is a 503-amino-acid chain: Lysine--tRNA ligase (503 aa).

Residues glutamate 412 and glutamate 419 each contribute to the Mg(2+) site.

The protein belongs to the class-II aminoacyl-tRNA synthetase family. In terms of assembly, homodimer. It depends on Mg(2+) as a cofactor.

Its subcellular location is the cytoplasm. It carries out the reaction tRNA(Lys) + L-lysine + ATP = L-lysyl-tRNA(Lys) + AMP + diphosphate. The chain is Lysine--tRNA ligase from Buchnera aphidicola subsp. Schizaphis graminum (strain Sg).